Here is a 597-residue protein sequence, read N- to C-terminus: UvrABC system protein C (597 aa).

Positions 15–93 (DNPGVYQYYD…IKTLQPRYNV (79 aa)) constitute a GIY-YIG domain. The UVR domain occupies 207–242 (KESLKDFKKLMNNYAQNLQFEEAQKIKEKIEVLENY).

Belongs to the UvrC family. As to quaternary structure, interacts with UvrB in an incision complex.

It localises to the cytoplasm. In terms of biological role, the UvrABC repair system catalyzes the recognition and processing of DNA lesions. UvrC both incises the 5' and 3' sides of the lesion. The N-terminal half is responsible for the 3' incision and the C-terminal half is responsible for the 5' incision. In Flavobacterium johnsoniae (strain ATCC 17061 / DSM 2064 / JCM 8514 / BCRC 14874 / CCUG 350202 / NBRC 14942 / NCIMB 11054 / UW101) (Cytophaga johnsonae), this protein is UvrABC system protein C.